Consider the following 275-residue polypeptide: MKNWIVGMVALVTMVPVMAATPWQKITHPVAGSPQSIGGFANGCVIGAQPLPLESADYQVMRSDQRRYFGHPDLLNFIHRLSAQTHQQQLGTVLIGDMAMPAGGRFSSGHASHQSGLDVDIWLQLPKQRWSQQQLLKPQPIDLVAVDGKRVIPALWQPQIESLIKLAAKDNDVTRIFVNPAIKKQLCLDAGADRQWLHKVRPWFAHRAHMHVRLRCPANSLECVDQDTPPPGDGCGAELESWFQPPPPSAKPGKTLPPPLPPSCQALLDNHFATE.

A signal peptide spans 1–19; that stretch reads MKNWIVGMVALVTMVPVMA. 3 disulfides stabilise this stretch: cysteine 44/cysteine 264, cysteine 187/cysteine 235, and cysteine 216/cysteine 223. Zn(2+) contacts are provided by histidine 110, histidine 113, aspartate 120, aspartate 147, and histidine 211. Positions 227 to 262 are disordered; that stretch reads DTPPPGDGCGAELESWFQPPPPSAKPGKTLPPPLPP. Over residues 244–262 the composition is skewed to pro residues; it reads QPPPPSAKPGKTLPPPLPP.

This sequence belongs to the peptidase M74 family. In terms of assembly, dimer. The cofactor is Zn(2+).

It is found in the periplasm. Its function is as follows. Murein endopeptidase that cleaves the D-alanyl-meso-2,6-diamino-pimelyl amide bond that connects peptidoglycan strands. Likely plays a role in the removal of murein from the sacculus. The sequence is that of Penicillin-insensitive murein endopeptidase from Yersinia pestis.